Reading from the N-terminus, the 264-residue chain is Thymidylate synthase (264 aa).

DUMP is bound at residue R21. Residue H51 coordinates (6R)-5,10-methylene-5,6,7,8-tetrahydrofolate. 126 to 127 serves as a coordination point for dUMP; sequence RR. C146 (nucleophile) is an active-site residue. Residues 166–169, N177, and 207–209 contribute to the dUMP site; these read RSAD and HIY. D169 is a (6R)-5,10-methylene-5,6,7,8-tetrahydrofolate binding site. (6R)-5,10-methylene-5,6,7,8-tetrahydrofolate is bound at residue A263.

The protein belongs to the thymidylate synthase family. Bacterial-type ThyA subfamily. Homodimer.

It localises to the cytoplasm. It catalyses the reaction dUMP + (6R)-5,10-methylene-5,6,7,8-tetrahydrofolate = 7,8-dihydrofolate + dTMP. Its pathway is pyrimidine metabolism; dTTP biosynthesis. Functionally, catalyzes the reductive methylation of 2'-deoxyuridine-5'-monophosphate (dUMP) to 2'-deoxythymidine-5'-monophosphate (dTMP) while utilizing 5,10-methylenetetrahydrofolate (mTHF) as the methyl donor and reductant in the reaction, yielding dihydrofolate (DHF) as a by-product. This enzymatic reaction provides an intracellular de novo source of dTMP, an essential precursor for DNA biosynthesis. The sequence is that of Thymidylate synthase from Parabacteroides distasonis (strain ATCC 8503 / DSM 20701 / CIP 104284 / JCM 5825 / NCTC 11152).